A 188-amino-acid polypeptide reads, in one-letter code: MSIKSDKWIRRMAQEHGMIEPFVERQVRGSDDSRVISYGVSSYGYDVRCTNHFKVFTNINSAIVDPKNFDAGSFVDVHSDVCIIPPNSFALATTVEYFRIPRNVLTICLGKSTYARCGIIVNVTPLEPEWEGQVTLEFSNTTNLPAKIYANEGVAQMLFLESDEECEVSYKDRAGKYQGQRGVTLPRT.

DCTP-binding positions include 111 to 116, 135 to 137, glutamine 156, tyrosine 170, and glutamine 180; these read KSTYAR and TLE. Glutamate 137 serves as the catalytic Proton donor/acceptor.

This sequence belongs to the dCTP deaminase family. In terms of assembly, homotrimer.

It carries out the reaction dCTP + H2O + H(+) = dUTP + NH4(+). It functions in the pathway pyrimidine metabolism; dUMP biosynthesis; dUMP from dCTP (dUTP route): step 1/2. Functionally, catalyzes the deamination of dCTP to dUTP. The protein is dCTP deaminase of Pseudomonas fluorescens (strain Pf0-1).